Reading from the N-terminus, the 152-residue chain is Leukocyte-associated immunoglobulin-like receptor 2 (152 aa).

Residues 1-21 (MSPHLTALLGLVLCLAQTIHT) form the signal peptide. The Ig-like C2-type domain occupies 29–117 (PSISAEPGTV…GWSEHSDFLE (89 aa)). Cysteines 49 and 101 form a disulfide. Positions 120–152 (VKESSGGPDSPDTEPGSSAGTVPGTEASGFDAP) are disordered.

It is found in the secreted. This Homo sapiens (Human) protein is Leukocyte-associated immunoglobulin-like receptor 2 (LAIR2).